Consider the following 876-residue polypeptide: Pre-mRNA-splicing factor ATP-dependent RNA helicase-like protein PRP2 (876 aa).

The interval Met1–Glu111 is disordered. Residue Ser2 is modified to N-acetylserine. A compositionally biased stretch (polar residues) spans Val61–Glu70. The Helicase ATP-binding domain maps to Leu233–Pro399. Gly246–Thr253 contributes to the ATP binding site. A DEAH box motif is present at residues Asp346–His349. The region spanning Thr424–Gly598 is the Helicase C-terminal domain.

This sequence belongs to the DEAD box helicase family. DEAH subfamily. In terms of assembly, interacts directly with pre-mRNA. According to PubMed:2251118, associated with spliceosomes prior to and throughout step 1 of the splicing reaction. According to PubMed:8943336, it leaves the spliceosome before reaction 1. Interacts with SPP2.

The protein resides in the nucleus. The enzyme catalyses ATP + H2O = ADP + phosphate + H(+). Functionally, involved in pre-mRNA splicing. Is required together with ATP and at least one other factor, for the first cleavage-ligation reaction. Functions as a molecular motor in the activation of the precatalytic spliceosome for the first transesterification reaction of pre-mRNA splicing by hydrolyzing ATP to cause the activation of the spliceosome without the occurrence of splicing. Capable of hydrolyzing nucleoside triphosphates in the presence of single-stranded RNAs such as poly(U). In Saccharomyces cerevisiae (strain ATCC 204508 / S288c) (Baker's yeast), this protein is Pre-mRNA-splicing factor ATP-dependent RNA helicase-like protein PRP2 (PRP2).